A 320-amino-acid polypeptide reads, in one-letter code: MMLMRESPDDRHYTVSATGVWKKRGGIDVLRGLDMYVRRGERYGIMGTNGAGKSSLINIILGLTPPDRGTVTVFGKDMRRQGHLARARIGVVPQDDCLEQNMTPYENVMLYGRLCRMTASEARKRADQIFEKFSMMDCANRPVRLLSGGMRRLTMVARALVNDPYVIILDEATVGLDAKSRSALWQQIEASNATGATVLVISHLAEDLERMTDRIACICAGTVRAEWETAALLKALGALKILEIDHSVSPRGKELFCNHGLHVHENDGRLSAVHPSSDFALEAVLKKEAVPTTTRFATLDDIIRFPGFPWTGVGGVNGEK.

Residues 15-245 (VSATGVWKKR…LGALKILEID (231 aa)) enclose the ABC transporter domain. 47 to 54 (GTNGAGKS) contacts ATP.

Belongs to the ABC transporter superfamily. Lipooligosaccharide exporter (TC 3.A.1.102) family. As to quaternary structure, the complex is composed of two ATP-binding proteins (NodI) and two transmembrane proteins (NodJ).

It is found in the cell inner membrane. In terms of biological role, part of the ABC transporter complex NodIJ involved in the export of the nodulation factors (Nod factors), the bacterial signal molecules that induce symbiosis and subsequent nodulation induction. Nod factors are LCO (lipo-chitin oligosaccharide), a modified beta-1,4-linked N-acetylglucosamine oligosaccharide. This subunit is responsible for energy coupling to the transport system. This Azorhizobium caulinodans (strain ATCC 43989 / DSM 5975 / JCM 20966 / LMG 6465 / NBRC 14845 / NCIMB 13405 / ORS 571) protein is Nod factor export ATP-binding protein I.